A 98-amino-acid polypeptide reads, in one-letter code: Integration host factor subunit alpha (98 aa).

Positions 53-69 (DLREKSERPGRNPKTGE) are enriched in basic and acidic residues. The disordered stretch occupies residues 53–73 (DLREKSERPGRNPKTGEDIPI).

The protein belongs to the bacterial histone-like protein family. In terms of assembly, heterodimer of an alpha and a beta chain.

Its function is as follows. This protein is one of the two subunits of integration host factor, a specific DNA-binding protein that functions in genetic recombination as well as in transcriptional and translational control. The chain is Integration host factor subunit alpha from Aliivibrio salmonicida (strain LFI1238) (Vibrio salmonicida (strain LFI1238)).